A 120-amino-acid polypeptide reads, in one-letter code: Small ribosomal subunit protein bS16 (120 aa).

The tract at residues 81–120 is disordered; sequence GLAKRPTRNNPQKAEPGEKAKERAAKRAEKAAAPAEDAAA. Residues 95–110 show a composition bias toward basic and acidic residues; it reads EPGEKAKERAAKRAEK. The segment covering 111–120 has biased composition (low complexity); sequence AAAPAEDAAA.

It belongs to the bacterial ribosomal protein bS16 family.

This chain is Small ribosomal subunit protein bS16, found in Methylorubrum extorquens (strain CM4 / NCIMB 13688) (Methylobacterium extorquens).